A 306-amino-acid chain; its full sequence is MATH domain and coiled-coil domain-containing protein At3g29580 (306 aa).

The region spanning 6–132 is the MATH domain; that stretch reads DNKFTWVIKN…NGEIKIVVEF (127 aa). A coiled-coil region spans residues 253 to 298; the sequence is FKLDWLEKKLNEVLEKKEKEESYETRMREIEEEMKDLKAKALDVGA.

This Arabidopsis thaliana (Mouse-ear cress) protein is MATH domain and coiled-coil domain-containing protein At3g29580.